The following is a 137-amino-acid chain: Endoribonuclease YbeY (137 aa).

Zn(2+) is bound by residues His-107, His-111, and Asp-117.

Belongs to the endoribonuclease YbeY family. The cofactor is Zn(2+).

The protein localises to the cytoplasm. In terms of biological role, single strand-specific metallo-endoribonuclease involved in late-stage 70S ribosome quality control and in maturation of the 3' terminus of the 16S rRNA. The polypeptide is Endoribonuclease YbeY (Bacteroides thetaiotaomicron (strain ATCC 29148 / DSM 2079 / JCM 5827 / CCUG 10774 / NCTC 10582 / VPI-5482 / E50)).